The primary structure comprises 459 residues: Phosphomethylpyrimidine synthase (459 aa).

Residues Asn81, Met110, Tyr140, His176, 196 to 198 (SRG), 237 to 240 (DSLR), and Glu276 contribute to the substrate site. His280 lines the Zn(2+) pocket. Tyr303 contacts substrate. His344 contacts Zn(2+). Residues Cys424, Cys427, and Cys432 each contribute to the [4Fe-4S] cluster site.

Belongs to the ThiC family. [4Fe-4S] cluster is required as a cofactor.

It carries out the reaction 5-amino-1-(5-phospho-beta-D-ribosyl)imidazole + S-adenosyl-L-methionine = 4-amino-2-methyl-5-(phosphooxymethyl)pyrimidine + CO + 5'-deoxyadenosine + formate + L-methionine + 3 H(+). It participates in cofactor biosynthesis; thiamine diphosphate biosynthesis. Catalyzes the synthesis of the hydroxymethylpyrimidine phosphate (HMP-P) moiety of thiamine from aminoimidazole ribotide (AIR) in a radical S-adenosyl-L-methionine (SAM)-dependent reaction. The polypeptide is Phosphomethylpyrimidine synthase (Gloeobacter violaceus (strain ATCC 29082 / PCC 7421)).